Consider the following 348-residue polypeptide: Protein RecA (348 aa).

An ATP-binding site is contributed by 65-72; sequence GPESSGKT.

Belongs to the RecA family.

The protein resides in the cytoplasm. Functionally, can catalyze the hydrolysis of ATP in the presence of single-stranded DNA, the ATP-dependent uptake of single-stranded DNA by duplex DNA, and the ATP-dependent hybridization of homologous single-stranded DNAs. It interacts with LexA causing its activation and leading to its autocatalytic cleavage. This is Protein RecA from Vibrio anguillarum (strain ATCC 68554 / 775) (Listonella anguillarum).